We begin with the raw amino-acid sequence, 85 residues long: Putative transmembrane protein ORF28 (85 aa).

The next 2 membrane-spanning stretches (helical) occupy residues 32–52 (IMLL…VQIV) and 59–79 (LLSV…MLGI).

The protein resides in the host membrane. In Haloarcula hispanica (His1V), this protein is Putative transmembrane protein ORF28.